The primary structure comprises 274 residues: 23S rRNA (adenosine(1067)-2'-O)-methyltransferase (274 aa).

S-adenosyl-L-methionine contacts are provided by residues R165, L195, 218-220, 238-240, and 247-252; these read GSE, IPM, and LNVSVS.

Belongs to the class IV-like SAM-binding methyltransferase superfamily. RNA methyltransferase TsnR/AvirB family. As to quaternary structure, homodimer.

It carries out the reaction adenosine(1067) in 23S rRNA + S-adenosyl-L-methionine = 2'-O-methyladenosine(1067) in 23S rRNA + S-adenosyl-L-homocysteine + H(+). Functionally, specifically methylates the adenosine-1067 in 23S ribosomal RNA. Confers resistance to antibiotic nosiheptide. The protein is 23S rRNA (adenosine(1067)-2'-O)-methyltransferase of Streptomyces actuosus.